The primary structure comprises 323 residues: Breast cancer metastasis-suppressor 1-like protein (323 aa).

The span at 1–15 (MPVHSREKKENNHDE) shows a compositional bias: basic and acidic residues. A disordered region spans residues 1 to 56 (MPVHSREKKENNHDEMEVDYGENEGSTSEEEETESSSVSEEGDSSEMDDEDCERRR). A compositionally biased stretch (acidic residues) spans 16 to 51 (MEVDYGENEGSTSEEEETESSSVSEEGDSSEMDDED). Coiled-coil stretches lie at residues 50–82 (EDCE…KERL) and 147–178 (EKLL…ITSE).

It belongs to the BRMS1 family.

Its subcellular location is the nucleus. Functionally, involved in the histone deacetylase (HDAC1)-dependent transcriptional repression activity. In Gallus gallus (Chicken), this protein is Breast cancer metastasis-suppressor 1-like protein (BRMS1L).